The sequence spans 453 residues: Trigger factor (453 aa).

Positions Gly-171–Val-256 constitute a PPIase FKBP-type domain.

The protein belongs to the FKBP-type PPIase family. Tig subfamily.

It localises to the cytoplasm. It catalyses the reaction [protein]-peptidylproline (omega=180) = [protein]-peptidylproline (omega=0). Involved in protein export. Acts as a chaperone by maintaining the newly synthesized protein in an open conformation. Functions as a peptidyl-prolyl cis-trans isomerase. This is Trigger factor from Rhodopseudomonas palustris (strain BisB5).